The primary structure comprises 403 residues: Ribosomal RNA large subunit methyltransferase I (403 aa).

The PUA domain occupies 9-88 (YPRLVLSKGR…ESIDIAFFTR (80 aa)).

This sequence belongs to the methyltransferase superfamily. RlmI family.

Its subcellular location is the cytoplasm. The enzyme catalyses cytidine(1962) in 23S rRNA + S-adenosyl-L-methionine = 5-methylcytidine(1962) in 23S rRNA + S-adenosyl-L-homocysteine + H(+). Functionally, specifically methylates the cytosine at position 1962 (m5C1962) of 23S rRNA. This Salmonella schwarzengrund (strain CVM19633) protein is Ribosomal RNA large subunit methyltransferase I.